A 352-amino-acid chain; its full sequence is Phenylalanine--tRNA ligase alpha subunit (352 aa).

Mg(2+) is bound at residue Glu258.

The protein belongs to the class-II aminoacyl-tRNA synthetase family. Phe-tRNA synthetase alpha subunit type 1 subfamily. Tetramer of two alpha and two beta subunits. It depends on Mg(2+) as a cofactor.

The protein localises to the cytoplasm. It carries out the reaction tRNA(Phe) + L-phenylalanine + ATP = L-phenylalanyl-tRNA(Phe) + AMP + diphosphate + H(+). In Staphylococcus aureus (strain bovine RF122 / ET3-1), this protein is Phenylalanine--tRNA ligase alpha subunit.